We begin with the raw amino-acid sequence, 220 residues long: Iron-sulfur cluster repair protein YtfE (220 aa).

It belongs to the RIC family. YtfE subfamily. In terms of assembly, homodimer.

The protein localises to the cytoplasm. Di-iron-containing protein involved in the repair of iron-sulfur clusters damaged by oxidative and nitrosative stress conditions. This is Iron-sulfur cluster repair protein YtfE from Enterobacter sp. (strain 638).